Consider the following 374-residue polypeptide: Dual-specificity RNA methyltransferase RlmN (374 aa).

Glu-94 functions as the Proton acceptor in the catalytic mechanism. The region spanning 100–339 (EEDRATLCVS…VTIRKTRGDD (240 aa)) is the Radical SAM core domain. An intrachain disulfide couples Cys-107 to Cys-344. Residues Cys-114, Cys-118, and Cys-121 each coordinate [4Fe-4S] cluster. Residues 168-169 (GE), Ser-200, 222-224 (SLH), and Asn-301 contribute to the S-adenosyl-L-methionine site. Cys-344 serves as the catalytic S-methylcysteine intermediate.

It belongs to the radical SAM superfamily. RlmN family. [4Fe-4S] cluster serves as cofactor.

Its subcellular location is the cytoplasm. The enzyme catalyses adenosine(2503) in 23S rRNA + 2 reduced [2Fe-2S]-[ferredoxin] + 2 S-adenosyl-L-methionine = 2-methyladenosine(2503) in 23S rRNA + 5'-deoxyadenosine + L-methionine + 2 oxidized [2Fe-2S]-[ferredoxin] + S-adenosyl-L-homocysteine. It catalyses the reaction adenosine(37) in tRNA + 2 reduced [2Fe-2S]-[ferredoxin] + 2 S-adenosyl-L-methionine = 2-methyladenosine(37) in tRNA + 5'-deoxyadenosine + L-methionine + 2 oxidized [2Fe-2S]-[ferredoxin] + S-adenosyl-L-homocysteine. Specifically methylates position 2 of adenine 2503 in 23S rRNA and position 2 of adenine 37 in tRNAs. m2A2503 modification seems to play a crucial role in the proofreading step occurring at the peptidyl transferase center and thus would serve to optimize ribosomal fidelity. This is Dual-specificity RNA methyltransferase RlmN from Vibrio vulnificus (strain YJ016).